We begin with the raw amino-acid sequence, 147 residues long: Protein LOL4 (147 aa).

3 putative zinc finger regions span residues 4 to 34 (QLIC…LTAV), 44 to 74 (ELIC…LNST), and 82 to 112 (HLTC…VNHV).

It is found in the nucleus. Its function is as follows. Putative zinc finger that may be involved in programmed cell death and defense response. This Oryza sativa subsp. japonica (Rice) protein is Protein LOL4 (LOL4).